The chain runs to 210 residues: Uridine kinase (210 aa).

12–19 (GGSGSGKT) serves as a coordination point for ATP.

It belongs to the uridine kinase family.

Its subcellular location is the cytoplasm. The catalysed reaction is uridine + ATP = UMP + ADP + H(+). It catalyses the reaction cytidine + ATP = CMP + ADP + H(+). The protein operates within pyrimidine metabolism; CTP biosynthesis via salvage pathway; CTP from cytidine: step 1/3. Its pathway is pyrimidine metabolism; UMP biosynthesis via salvage pathway; UMP from uridine: step 1/1. The polypeptide is Uridine kinase (Leuconostoc citreum (strain KM20)).